Consider the following 749-residue polypeptide: Disintegrin and metalloproteinase domain-containing protein 10 (749 aa).

The first 18 residues, 1-18 (MVLPTVLILLLSWAAGLG), serve as a signal peptide directing secretion. The propeptide occupies 19 to 214 (GQYGNPLNKY…MGPELLRKKR (196 aa)). Residues 171-178 (GGCADHSV) carry the Cysteine switch motif. Cys-173 provides a ligand contact to Zn(2+). Over 215-673 (TTLAERNTCQ…SPQLYENIAE (459 aa)) the chain is Extracellular. The Peptidase M12B domain maps to 221–457 (NTCQLYIQTD…KRNNCFVESG (237 aa)). 17 disulfides stabilise this stretch: Cys-223–Cys-314, Cys-345–Cys-452, Cys-400–Cys-436, Cys-461–Cys-496, Cys-472–Cys-485, Cys-474–Cys-480, Cys-484–Cys-516, Cys-504–Cys-512, Cys-511–Cys-537, Cys-525–Cys-544, Cys-531–Cys-563, Cys-556–Cys-568, Cys-573–Cys-599, Cys-581–Cys-608, Cys-583–Cys-598, Cys-595–Cys-640, and Cys-633–Cys-646. 2 N-linked (GlcNAc...) asparagine glycosylation sites follow: Asn-268 and Asn-279. His-384 is a binding site for Zn(2+). Residue Glu-385 is part of the active site. Zn(2+)-binding residues include His-388 and His-394. N-linked (GlcNAc...) asparagine glycosylation is present at Asn-440. The 95-residue stretch at 458–552 (QPICGNGMVE…LCPASDPKPN (95 aa)) folds into the Disintegrin domain. N-linked (GlcNAc...) asparagine glycosylation is present at Asn-552. The helical transmembrane segment at 674-697 (WIVAHWWAVLLMGIALIMLMAGFI) threads the bilayer. The Cytoplasmic segment spans residues 698–749 (KICSVHTPSSNPKLPPPKPLPGTLKRRRPPQPIQQPPRQRPRESYQMGHMRR). The segment at 705 to 749 (PSSNPKLPPPKPLPGTLKRRRPPQPIQQPPRQRPRESYQMGHMRR) is disordered. The short motif at 709–716 (PKLPPPKP) is the SH3-binding element. Thr-720 is subject to Phosphothreonine. Residues 723 to 729 (RRRPPQP) carry the SH3-binding motif. Residues 735-749 (RQRPRESYQMGHMRR) are interaction with AP2A1, AP2A2 and AP2M1.

Forms a ternary EFNA5-EPHA3-ADAM10 complex mediating EFNA5 extracellular domain shedding by ADAM10 which regulates the EFNA5-EPHA3 complex internalization and function, the cleavage occurs in trans, with ADAM10 and its substrate being on the membranes of opposing cells. Interacts with the clathrin adapter AP2 complex subunits AP2A1, AP2A2, AP2B1, and AP2M1; this interaction facilitates ADAM10 endocytosis from the plasma membrane during long-term potentiation in hippocampal neurons. Forms a ternary complex composed of ADAM10, EPHA4 and CADH1; within the complex, ADAM10 cleaves CADH1 which disrupts adherens junctions. Interacts with EPHA2. Interacts with NGF in a divalent cation-dependent manner. Interacts with TSPAN14; the interaction promotes ADAM10 maturation and cell surface expression. Interacts with TSPAN5, TSPAN10, TSPAN14, TSPAN15, TSPAN17 and TSPAN33; these interactions regulate ADAM10 substrate specificity, endocytosis and turnover. Interacts (via extracellular domain) with TSPAN33 (via extracellular domain) and (via cytoplasmic domain) with AFDN; interaction with TSPAN33 allows the docking of ADAM10 to zonula adherens through a PDZ11-dependent interaction between TSPAN33 and PLEKHA7 while interaction with AFDN locks ADAM10 at zonula adherens. Interacts with DLG1; this interaction recruits ADAM10 to the cell membrane during long-term depression in hippocampal neurons. Interacts (via extracellular domain) with BACE1 (via extracellular domain). Interacts with FAM171A1. Zn(2+) serves as cofactor. The precursor is cleaved by furin and PCSK7. Expressed in brain, kidney, lung, spleen, ovary and testis.

The protein localises to the cell membrane. Its subcellular location is the golgi apparatus membrane. It is found in the cytoplasmic vesicle. It localises to the clathrin-coated vesicle. The protein resides in the cell projection. The protein localises to the axon. Its subcellular location is the dendrite. It is found in the cell junction. It localises to the adherens junction. The protein resides in the cytoplasm. The catalysed reaction is Endopeptidase of broad specificity.. Its activity is regulated as follows. Catalytically inactive when the propeptide is intact and associated with the mature enzyme. The disintegrin and cysteine-rich regions modulate access of substrates to exerts an inhibitory effect on the cleavage of ADAM10 substrates. Its function is as follows. Transmembrane metalloprotease which mediates the ectodomain shedding of a myriad of transmembrane proteins, including adhesion proteins, growth factor precursors and cytokines being essential for development and tissue homeostasis. Associates with six members of the tetraspanin superfamily TspanC8 which regulate its exit from the endoplasmic reticulum and its substrate selectivity. Cleaves the membrane-bound precursor of TNF-alpha at '76-Ala-|-Val-77' to its mature soluble form. Responsible for the proteolytical release of soluble JAM3 from endothelial cells surface. Responsible for the proteolytic release of several other cell-surface proteins, including heparin-binding epidermal growth-like factor, ephrin-A2, CD44, CDH2 and for constitutive and regulated alpha-secretase cleavage of amyloid precursor protein (APP). Contributes to the normal cleavage of the cellular prion protein. Involved in the cleavage of the adhesion molecule L1 at the cell surface and in released membrane vesicles, suggesting a vesicle-based protease activity. Also controls the proteolytic processing of Notch and mediates lateral inhibition during neurogenesis. Required for the development of type 1 transitional B cells into marginal zone B cells, probably by cleaving Notch. Responsible for the FasL ectodomain shedding and for the generation of the remnant ADAM10-processed FasL (FasL APL) transmembrane form. Also cleaves the ectodomain of the integral membrane proteins CORIN and ITM2B. Mediates the proteolytic cleavage of LAG3, leading to release the secreted form of LAG3. Mediates the proteolytic cleavage of IL6R and IL11RA, leading to the release of secreted forms of IL6R and IL11RA. Enhances the cleavage of CHL1 by BACE1. Cleaves NRCAM. Cleaves TREM2, resulting in shedding of the TREM2 ectodomain. Involved in the development and maturation of glomerular and coronary vasculature. During development of the cochlear organ of Corti, promotes pillar cell separation by forming a ternary complex with CADH1 and EPHA4 and cleaving CADH1 at adherens junctions. May regulate the EFNA5-EPHA3 signaling. Regulates leukocyte transmigration as a sheddase for the adherens junction protein VE-cadherin/CDH5 in endothelial cells. This Rattus norvegicus (Rat) protein is Disintegrin and metalloproteinase domain-containing protein 10 (Adam10).